Reading from the N-terminus, the 207-residue chain is MAIERYFIKEGIKEMLIDEYLEKELRRAGYGGLDIKKTPLGTKVVIFVERPGFVIGRGGRKIRELTRILERRFNLENPQIEVEEIKNSYFNAKVQATRLAQALERGVHFRRAAYAAIRAIMSNGARGVEIRISGKLTGERAKSVRFYQGYIAKVGNPAETLVSRGYAQALLKLGVLGVKVSIMPPDARLPDEIEIVEKPIEEEVSEQ.

Residues 17–86 (IDEYLEKELR…NPQIEVEEIK (70 aa)) enclose the KH type-2 domain.

It belongs to the universal ribosomal protein uS3 family. Part of the 30S ribosomal subunit.

Binds the lower part of the 30S subunit head. The protein is Small ribosomal subunit protein uS3 of Thermococcus sibiricus (strain DSM 12597 / MM 739).